The following is a 567-amino-acid chain: MSDRVEVNERRSDSVSEKEPARDDARKDVTDDQEDAPPFMTANNARVMLVQAIGGSLNGYSIGFVGVYSTLFGYSTNCASFLQENSCTTVPNADCKWFVSPTGSSYCGWPEVTCRKEYAYSSPAEMPGALARCEADSRCRWSYSDEECQNPSGYSSSESGIFAGSMIAGCLIGSVFAGPLASKIGARLSFLLVGLVGVVASVMYHASCAADEFWVLIVGRFVIGLFLGVICVACPVYTDQNAHPKWKRTIGVMFQVFTTLGIFVAALMGLALGQSIRFDHDGDQKVMARMQGLCVFSTLFSLLTVVLGIVTRESRAKFDGGEEGRAELNPSEYGYVEMIPRLLMGCVMAGTLQLTGINAVMNYAPTIMGSLGLAPLVGNFVVMLWNFVTTLASIPLSYVFTMRHVFLFGSIFTSCMCLFMCGIPVYPGVSKKLEAKNGVAITGILLFILGFEVCVGPCYYVLTQDMFPPSFRPRGASFTQVAQFIFNLIINVCYPIATESISGGPSGNQDKGQAVAFIFFGGLGLICFVIQVFFLHPWDEERDGKKVVAPAIGKKELSEESIGNRAE.

Over residues 1-30 the composition is skewed to basic and acidic residues; that stretch reads MSDRVEVNERRSDSVSEKEPARDDARKDVT. The segment at 1 to 38 is disordered; the sequence is MSDRVEVNERRSDSVSEKEPARDDARKDVTDDQEDAPP. Residues 1 to 46 are Cytoplasmic-facing; the sequence is MSDRVEVNERRSDSVSEKEPARDDARKDVTDDQEDAPPFMTANNAR. The chain crosses the membrane as a helical span at residues 47–67; sequence VMLVQAIGGSLNGYSIGFVGV. Over 68 to 160 the chain is Extracellular; sequence YSTLFGYSTN…PSGYSSSESG (93 aa). The helical transmembrane segment at 161–181 threads the bilayer; sequence IFAGSMIAGCLIGSVFAGPLA. Topologically, residues 182-189 are cytoplasmic; that stretch reads SKIGARLS. Residues 190-210 traverse the membrane as a helical segment; the sequence is FLLVGLVGVVASVMYHASCAA. Over 211–212 the chain is Extracellular; that stretch reads DE. Residues 213 to 233 traverse the membrane as a helical segment; it reads FWVLIVGRFVIGLFLGVICVA. The Cytoplasmic segment spans residues 234 to 249; that stretch reads CPVYTDQNAHPKWKRT. Residues 250–270 form a helical membrane-spanning segment; the sequence is IGVMFQVFTTLGIFVAALMGL. The Extracellular segment spans residues 271–289; the sequence is ALGQSIRFDHDGDQKVMAR. A helical transmembrane segment spans residues 290–310; the sequence is MQGLCVFSTLFSLLTVVLGIV. Over 311–341 the chain is Cytoplasmic; sequence TRESRAKFDGGEEGRAELNPSEYGYVEMIPR. Residues 342–362 traverse the membrane as a helical segment; the sequence is LLMGCVMAGTLQLTGINAVMN. The Extracellular portion of the chain corresponds to 363–366; the sequence is YAPT. The helical transmembrane segment at 367 to 387 threads the bilayer; sequence IMGSLGLAPLVGNFVVMLWNF. Residues 388–404 are Cytoplasmic-facing; sequence VTTLASIPLSYVFTMRH. A helical membrane pass occupies residues 405–425; that stretch reads VFLFGSIFTSCMCLFMCGIPV. Topologically, residues 426-437 are extracellular; that stretch reads YPGVSKKLEAKN. The helical transmembrane segment at 438–458 threads the bilayer; that stretch reads GVAITGILLFILGFEVCVGPC. The Cytoplasmic segment spans residues 459 to 480; the sequence is YYVLTQDMFPPSFRPRGASFTQ. Residues 481–501 traverse the membrane as a helical segment; the sequence is VAQFIFNLIINVCYPIATESI. Topologically, residues 502 to 514 are extracellular; sequence SGGPSGNQDKGQA. The chain crosses the membrane as a helical span at residues 515–535; it reads VAFIFFGGLGLICFVIQVFFL. Residues 536–567 are Cytoplasmic-facing; sequence HPWDEERDGKKVVAPAIGKKELSEESIGNRAE.

It belongs to the major facilitator superfamily. Sugar transporter (TC 2.A.1.1) family.

Its subcellular location is the membrane. In terms of biological role, probable membrane transport protein. The sequence is that of Probable transport protein (PRO-1) from Leishmania enriettii.